An 81-amino-acid chain; its full sequence is Cytochrome b559 subunit alpha (81 aa).

A helical transmembrane segment spans residues 21–35; the sequence is VIHSVTIPSLFVGGW. Residue His-23 participates in heme binding.

Belongs to the PsbE/PsbF family. As to quaternary structure, heterodimer of an alpha subunit and a beta subunit. PSII is composed of 1 copy each of membrane proteins PsbA, PsbB, PsbC, PsbD, PsbE, PsbF, PsbH, PsbI, PsbJ, PsbK, PsbL, PsbM, PsbT, PsbY, PsbZ, Psb30/Ycf12, at least 3 peripheral proteins of the oxygen-evolving complex and a large number of cofactors. It forms dimeric complexes. Heme b is required as a cofactor.

Its subcellular location is the plastid. It is found in the chloroplast thylakoid membrane. In terms of biological role, this b-type cytochrome is tightly associated with the reaction center of photosystem II (PSII). PSII is a light-driven water:plastoquinone oxidoreductase that uses light energy to abstract electrons from H(2)O, generating O(2) and a proton gradient subsequently used for ATP formation. It consists of a core antenna complex that captures photons, and an electron transfer chain that converts photonic excitation into a charge separation. The chain is Cytochrome b559 subunit alpha from Euglena gracilis.